The following is a 413-amino-acid chain: Cell division protein FtsZ 2 (413 aa).

GTP-binding positions include 132–134 (GTG), Glu171, Arg175, and Asp218.

It belongs to the FtsZ family. Homodimer. Polymerizes to form a dynamic ring structure in a strictly GTP-dependent manner. Interacts directly with several other division proteins.

The protein localises to the cytoplasm. Functionally, essential cell division protein that forms a contractile ring structure (Z ring) at the future cell division site. The regulation of the ring assembly controls the timing and the location of cell division. One of the functions of the FtsZ ring is to recruit other cell division proteins to the septum to produce a new cell wall between the dividing cells. Binds GTP and shows GTPase activity. This Thermococcus kodakarensis (strain ATCC BAA-918 / JCM 12380 / KOD1) (Pyrococcus kodakaraensis (strain KOD1)) protein is Cell division protein FtsZ 2.